Consider the following 452-residue polypeptide: MATTASSAANSASRFSIDSSISRSRHGDSSPWLLPSDSHDHPTLSLSQDDPFSAPSVSPPTGNNSSDYDNADKKPPPVWNMPSSNSSSDVGPVMGAAESWPALSLSARSSSIKSPSLDASKPFPDGSSSSIPPPQATSNTSTNANAGSSVSATSSENSAVNNSQRKPFRRNNNTSSSSTSSNVSNAAPLNTRDQNHSQRGGGSFGSGNFRNSQRNRNSSSYPRGEGLHHGNRRNYEHGNQSGFSHRNYSGRDMHLQPQRGVGMIRPQMLMGPPSFPASSAQYMAAPQLGSYGGPIIYPDYAQHVFMPHPSPDPMGLVGPFPLQPMYFRNFDAILYNKILTQVEYYFSADNLSRDEHLRDQMNDEGWVPVRVIAAFRRLAELTNNIQTILEALRSSEVVEIQGETLRRRGDWDKYLLPREPSRSGPAAGASNNASLVSQIESMTLSERSREGV.

Residues methionine 1–serine 22 are compositionally biased toward low complexity. The disordered stretch occupies residues methionine 1 to arginine 251. Residue alanine 2 is modified to N-acetylalanine. Over residues leucine 44–tyrosine 68 the composition is skewed to polar residues. 4 stretches are compositionally biased toward low complexity: residues serine 99–leucine 117, alanine 136–serine 163, asparagine 171–asparagine 185, and serine 206–arginine 223. The span at glutamate 225–glutamate 236 shows a compositional bias: basic and acidic residues. A compositionally biased stretch (polar residues) spans histidine 237 to asparagine 247. The HTH La-type RNA-binding domain occupies arginine 328–proline 417. The tract at residues glutamate 419–valine 452 is disordered. The span at arginine 422–serine 434 shows a compositional bias: low complexity. Residues leucine 435–serine 445 show a composition bias toward polar residues.

Belongs to the LARP family.

It localises to the cytoplasm. Its function is as follows. Promotes leaf senescence. The protein is La-related protein 1B (LARP1B) of Arabidopsis thaliana (Mouse-ear cress).